A 482-amino-acid chain; its full sequence is uncharacterized protein (482 aa).

One can recognise a DWNN domain in the interval 5 to 79; the sequence is IYYKFKSQKD…STSVIVRRVP (75 aa). Residues 86 to 108 are disordered; sequence GTAARYVSGAPKTTGARSDSVKR. The CCHC-type zinc-finger motif lies at 183-200; it reads YICYRCGQKGHWIQACPT. An RING-type; degenerate zinc finger spans residues 282–322; sequence CTLCKKLARNACRTPCCDKLFCEECIQTALLDSDFECPNCH. 2 disordered regions span residues 346 to 393 and 447 to 482; these read KSVL…SSAV and QVYH…TKTN. The segment covering 451-466 has biased composition (low complexity); it reads NNRNPPRTNSRPSNAS.

The protein resides in the nucleus. This is an uncharacterized protein from Schizosaccharomyces pombe (strain 972 / ATCC 24843) (Fission yeast).